The primary structure comprises 171 residues: ATP synthase subunit b 2 (171 aa).

A helical membrane pass occupies residues 9-29 (APWHHPVFWVAVAFVLFFVLF).

Belongs to the ATPase B chain family. F-type ATPases have 2 components, F(1) - the catalytic core - and F(0) - the membrane proton channel. F(1) has five subunits: alpha(3), beta(3), gamma(1), delta(1), epsilon(1). F(0) has three main subunits: a(1), b(2) and c(10-14). The alpha and beta chains form an alternating ring which encloses part of the gamma chain. F(1) is attached to F(0) by a central stalk formed by the gamma and epsilon chains, while a peripheral stalk is formed by the delta and b chains.

It localises to the cell inner membrane. Functionally, f(1)F(0) ATP synthase produces ATP from ADP in the presence of a proton or sodium gradient. F-type ATPases consist of two structural domains, F(1) containing the extramembraneous catalytic core and F(0) containing the membrane proton channel, linked together by a central stalk and a peripheral stalk. During catalysis, ATP synthesis in the catalytic domain of F(1) is coupled via a rotary mechanism of the central stalk subunits to proton translocation. Its function is as follows. Component of the F(0) channel, it forms part of the peripheral stalk, linking F(1) to F(0). The polypeptide is ATP synthase subunit b 2 (Granulibacter bethesdensis (strain ATCC BAA-1260 / CGDNIH1)).